We begin with the raw amino-acid sequence, 61 residues long: Large ribosomal subunit protein bL32 (61 aa).

This sequence belongs to the bacterial ribosomal protein bL32 family.

The chain is Large ribosomal subunit protein bL32 from Acidithiobacillus ferrooxidans (strain ATCC 23270 / DSM 14882 / CIP 104768 / NCIMB 8455) (Ferrobacillus ferrooxidans (strain ATCC 23270)).